Reading from the N-terminus, the 786-residue chain is LPS-assembly protein LptD (786 aa).

An N-terminal signal peptide occupies residues 1–24; it reads MKKRIPTLLATMIASALYSHQGLA. Cystine bridges form between Cys-31-Cys-726 and Cys-173-Cys-727.

It belongs to the LptD family. Component of the lipopolysaccharide transport and assembly complex. Interacts with LptE and LptA. In terms of processing, contains two intramolecular disulfide bonds.

It localises to the cell outer membrane. In terms of biological role, together with LptE, is involved in the assembly of lipopolysaccharide (LPS) at the surface of the outer membrane. In Salmonella choleraesuis (strain SC-B67), this protein is LPS-assembly protein LptD.